A 154-amino-acid polypeptide reads, in one-letter code: Protein FasC (154 aa).

The protein belongs to the periplasmic pilus chaperone family.

Could be required for the biogenesis of a putative fimbria. In Escherichia coli, this protein is Protein FasC (fasC).